Reading from the N-terminus, the 477-residue chain is UDP-N-acetylmuramoylalanine--D-glutamate ligase (477 aa).

127–133 (GTNGKTT) is an ATP binding site.

It belongs to the MurCDEF family.

It is found in the cytoplasm. It catalyses the reaction UDP-N-acetyl-alpha-D-muramoyl-L-alanine + D-glutamate + ATP = UDP-N-acetyl-alpha-D-muramoyl-L-alanyl-D-glutamate + ADP + phosphate + H(+). The protein operates within cell wall biogenesis; peptidoglycan biosynthesis. Its function is as follows. Cell wall formation. Catalyzes the addition of glutamate to the nucleotide precursor UDP-N-acetylmuramoyl-L-alanine (UMA). This Prochlorococcus marinus (strain MIT 9515) protein is UDP-N-acetylmuramoylalanine--D-glutamate ligase.